Here is a 139-residue protein sequence, read N- to C-terminus: Acidic phospholipase A2 H1E6 (139 aa).

The first 16 residues, methionine 1–glycine 16, serve as a signal peptide directing secretion. 7 cysteine pairs are disulfide-bonded: cysteine 42–cysteine 132, cysteine 44–cysteine 60, cysteine 59–cysteine 111, cysteine 65–cysteine 139, cysteine 66–cysteine 104, cysteine 73–cysteine 97, and cysteine 91–cysteine 102. Residues tyrosine 43, glycine 45, and glycine 47 each coordinate Ca(2+). Histidine 63 is a catalytic residue. Ca(2+) is bound at residue aspartate 64. Residue aspartate 105 is part of the active site.

As to quaternary structure, homodimer. Ca(2+) is required as a cofactor. Expressed by the venom gland.

The protein localises to the secreted. The enzyme catalyses a 1,2-diacyl-sn-glycero-3-phosphocholine + H2O = a 1-acyl-sn-glycero-3-phosphocholine + a fatty acid + H(+). Its function is as follows. Snake venom phospholipase A2 (PLA2) that inhibits ADP-induced platelet aggregation. PLA2 catalyzes the calcium-dependent hydrolysis of the 2-acyl groups in 3-sn-phosphoglycerides. This is Acidic phospholipase A2 H1E6 from Calloselasma rhodostoma (Malayan pit viper).